The following is a 644-amino-acid chain: MFQDNPLLAQLKQQLHSQTPRAEGVVKATEKGFGFLEVDAQKSYFIPPPQMKKVMHGDRIIAVIHSEKERESAEPEELVEPFLTRFVGKVQGKNDRLAIVPDHPLLKDAIPCRAARGLNHEFKEGDWAVAEMRRHPLKGDRSFYAELTQYITFGDDHFVPWWVTLARHNLEKEAPDGVATEMLDEGLVREDLTALDFVTIDSASTEDMDDALFAKALPDGKLQLIVAIADPTAWIAEGSKLDKAAKIRAFTNYLPGFNIPMLPRELSDDLCSLRANEVRPVLACRMTFSTDGTIEDNIEFFAATIESKAKLVYDQVSDWLENTGDWQPESEAIAEQVRLLAQICQRRGEWRHNHALVFKDRLDYRFILGEKGEVLDIVAEPRRIANRIVEEAMIAANICAARVLRDKLGFGIYNVHMGFDPANADALAALLKTHGLHVDAEEVLTLDGFCKLRRELDAQPTGFLDSRIRRFQSFAEISTEPGPHFGLGLEAYATWTSPIRKYGDMINHRLLKAVIKGETATRPQDEITVQMAERRRLNRMAERDVGDWLYARFLKDKAGTDTRFAAEIVDISRGGMRVRLVDNGAIAFIPAPFLHAVRDELVCSQENGTVQIKGETAYKVTDVIDVTIAEVRMETRSIIARPVA.

The 328-residue stretch at 189 to 516 (REDLTALDFV…NHRLLKAVIK (328 aa)) folds into the RNB domain. The S1 motif domain occupies 561–643 (DTRFAAEIVD…ETRSIIARPV (83 aa)).

The protein belongs to the RNR ribonuclease family. RNase II subfamily.

The protein localises to the cytoplasm. The enzyme catalyses Exonucleolytic cleavage in the 3'- to 5'-direction to yield nucleoside 5'-phosphates.. Its function is as follows. Involved in mRNA degradation. Hydrolyzes single-stranded polyribonucleotides processively in the 3' to 5' direction. The polypeptide is Exoribonuclease 2 (Escherichia coli (strain UTI89 / UPEC)).